A 130-amino-acid polypeptide reads, in one-letter code: Protein NrdI (130 aa).

This sequence belongs to the NrdI family.

Functionally, probably involved in ribonucleotide reductase function. In Staphylococcus carnosus (strain TM300), this protein is Protein NrdI.